A 1182-amino-acid chain; its full sequence is Retrotransposable element SLACS 132 kDa protein (1182 aa).

4 disordered regions span residues 77–97, 163–220, 317–339, and 418–478; these read GERS…PRER, DVLD…STDQ, RRKR…ALRL, and RTAR…STAP. Over residues 163 to 174 the composition is skewed to acidic residues; the sequence is DVLDEEEQDDDL. Positions 420 to 446 are enriched in basic and acidic residues; that stretch reads ARREQQQQRGKDNQEEEDRQKKEEKSL. The span at 456–475 shows a compositional bias: polar residues; sequence SVRQGGQPSSSQPKRLNRWS. The Reverse transcriptase domain maps to 560–790; that stretch reads NADVSMEVGR…TGDTGFGTAV (231 aa).

The enzyme catalyses DNA(n) + a 2'-deoxyribonucleoside 5'-triphosphate = DNA(n+1) + diphosphate. The polypeptide is Retrotransposable element SLACS 132 kDa protein (Trypanosoma brucei gambiense).